Reading from the N-terminus, the 741-residue chain is Cysteine--tRNA ligase, cytoplasmic (741 aa).

Cys46 contacts Zn(2+). The short motif at Pro48–His58 is the 'HIGH' region element. Ser297 carries the post-translational modification Phosphoserine. Residues Cys340, His365, and Glu369 each coordinate Zn(2+). The short motif at Lys398–Ser402 is the 'KMSKS' region element. Position 401 (Lys401) interacts with ATP. The segment at Phe697–Lys718 is disordered. Over residues Thr704 to Ser713 the composition is skewed to basic and acidic residues.

It belongs to the class-I aminoacyl-tRNA synthetase family. It depends on Zn(2+) as a cofactor.

The protein localises to the cytoplasm. It catalyses the reaction tRNA(Cys) + L-cysteine + ATP = L-cysteinyl-tRNA(Cys) + AMP + diphosphate. This is Cysteine--tRNA ligase, cytoplasmic from Drosophila melanogaster (Fruit fly).